A 357-amino-acid polypeptide reads, in one-letter code: Protein AAR2 homolog (357 aa).

It belongs to the AAR2 family.

This chain is Protein AAR2 homolog, found in Caenorhabditis elegans.